A 382-amino-acid polypeptide reads, in one-letter code: Alkanesulfonate monooxygenase (382 aa).

This sequence belongs to the SsuD family. Homotetramer.

The catalysed reaction is an alkanesulfonate + FMNH2 + O2 = an aldehyde + FMN + sulfite + H2O + 2 H(+). Catalyzes the desulfonation of aliphatic sulfonates. The chain is Alkanesulfonate monooxygenase from Yersinia pseudotuberculosis serotype IB (strain PB1/+).